Consider the following 148-residue polypeptide: Ribonuclease H (148 aa).

An RNase H type-1 domain is found at 1–142 (MSDSVEIYTD…ADQLANRGVD (142 aa)). Residues D10, E48, D70, and D134 each contribute to the Mg(2+) site. The segment at 129–148 (GNERADQLANRGVDEVRAQR) is disordered.

The protein belongs to the RNase H family. As to quaternary structure, monomer. Mg(2+) serves as cofactor.

The protein resides in the cytoplasm. The enzyme catalyses Endonucleolytic cleavage to 5'-phosphomonoester.. In terms of biological role, endonuclease that specifically degrades the RNA of RNA-DNA hybrids. The chain is Ribonuclease H from Pseudomonas entomophila (strain L48).